A 443-amino-acid polypeptide reads, in one-letter code: Glutamine synthetase (443 aa).

A GS beta-grasp domain is found at 11–97 (VQVEVPRPRF…VYGYIYKGDE (87 aa)). Positions 103 to 443 (PRGILKRVLE…EWELERYFYV (341 aa)) constitute a GS catalytic domain. Glu-126 and Glu-128 together coordinate Mg(2+). Glu-176 contacts ATP. 2 residues coordinate Mg(2+): Glu-181 and Glu-188. Residue Gly-233 participates in L-glutamate binding. Residue His-237 participates in Mg(2+) binding. ATP is bound by residues 239 to 241 (HIS) and Ser-241. Positions 287, 293, and 305 each coordinate L-glutamate. 2 residues coordinate ATP: Arg-305 and Arg-310. Mg(2+) is bound at residue Glu-322. Residue Arg-324 coordinates L-glutamate.

This sequence belongs to the glutamine synthetase family. Oligomer of 12 subunits arranged in the form of two hexagons. Mg(2+) is required as a cofactor. Mn(2+) serves as cofactor.

The protein localises to the cytoplasm. It carries out the reaction L-glutamate + NH4(+) + ATP = L-glutamine + ADP + phosphate + H(+). The enzyme catalyses hydroxylamine + L-glutamate + ATP = L-glutamine hydroxamate + ADP + phosphate. The activity of this enzyme is not controlled by adenylation. Carries out the ATP-dependent synthesis of glutamine from ammonium nitrogen and glutamate. Exhibits both L-gamma-glutamylhydroxamate synthetase and gamma-glutamyltransferase activities when using hydroxylamine as substrate; in fact, the enzyme possesses low biosynthetic activity, suggesting that the reaction is biased towards the degradation of glutamine under ammonia-rich conditions. Might play some role in ammonia assimilation under ammonia-starvation conditions. Can also use GTP instead of ATP in the synthetase reaction, but not CTP or UTP. The sequence is that of Glutamine synthetase from Thermococcus kodakarensis (strain ATCC BAA-918 / JCM 12380 / KOD1) (Pyrococcus kodakaraensis (strain KOD1)).